Reading from the N-terminus, the 182-residue chain is NADH-quinone oxidoreductase subunit B 2 (182 aa).

[4Fe-4S] cluster-binding residues include Cys-57, Cys-58, Cys-123, and Cys-153.

Belongs to the complex I 20 kDa subunit family. NDH-1 is composed of 14 different subunits. Subunits NuoB, C, D, E, F, and G constitute the peripheral sector of the complex. The cofactor is [4Fe-4S] cluster.

The protein localises to the cell membrane. The catalysed reaction is a quinone + NADH + 5 H(+)(in) = a quinol + NAD(+) + 4 H(+)(out). In terms of biological role, NDH-1 shuttles electrons from NADH, via FMN and iron-sulfur (Fe-S) centers, to quinones in the respiratory chain. The immediate electron acceptor for the enzyme in this species is believed to be a menaquinone. Couples the redox reaction to proton translocation (for every two electrons transferred, four hydrogen ions are translocated across the cytoplasmic membrane), and thus conserves the redox energy in a proton gradient. The chain is NADH-quinone oxidoreductase subunit B 2 from Symbiobacterium thermophilum (strain DSM 24528 / JCM 14929 / IAM 14863 / T).